The primary structure comprises 328 residues: Tryptophan--tRNA ligase (328 aa).

Residues 10 to 12 (QAT) and 18 to 19 (GN) contribute to the ATP site. Residues 11–19 (ATGSLHLGN) carry the 'HIGH' region motif. Asp134 serves as a coordination point for L-tryptophan. ATP is bound by residues 146–148 (GED), Ile186, and 195–199 (KMSKS). Positions 195-199 (KMSKS) match the 'KMSKS' region motif.

It belongs to the class-I aminoacyl-tRNA synthetase family. As to quaternary structure, homodimer.

Its subcellular location is the cytoplasm. It catalyses the reaction tRNA(Trp) + L-tryptophan + ATP = L-tryptophyl-tRNA(Trp) + AMP + diphosphate + H(+). Its function is as follows. Catalyzes the attachment of tryptophan to tRNA(Trp). The chain is Tryptophan--tRNA ligase from Rickettsia bellii (strain RML369-C).